The following is a 199-amino-acid chain: Dephospho-CoA kinase (199 aa).

Residues 3-199 form the DPCK domain; sequence ILGLTGSIGM…EVVKMPQRRA (197 aa). Position 11 to 16 (11 to 16) interacts with ATP; sequence GMGKST.

It belongs to the CoaE family.

It localises to the cytoplasm. It carries out the reaction 3'-dephospho-CoA + ATP = ADP + CoA + H(+). It functions in the pathway cofactor biosynthesis; coenzyme A biosynthesis; CoA from (R)-pantothenate: step 5/5. Catalyzes the phosphorylation of the 3'-hydroxyl group of dephosphocoenzyme A to form coenzyme A. The polypeptide is Dephospho-CoA kinase (Bradyrhizobium diazoefficiens (strain JCM 10833 / BCRC 13528 / IAM 13628 / NBRC 14792 / USDA 110)).